We begin with the raw amino-acid sequence, 613 residues long: Leucine aminopeptidase 2 (613 aa).

A peptide contacts are provided by residues glutamine 134–glutamine 136 and proline 265–glutamate 270. Residue histidine 294 participates in Zn(2+) binding. Glutamate 295 acts as the Proton acceptor in catalysis. Residues histidine 298 and glutamate 317 each contribute to the Zn(2+) site. The active-site Proton donor is the tyrosine 382.

It belongs to the peptidase M1 family. Zn(2+) serves as cofactor.

It is found in the cytoplasm. The protein localises to the nucleus. It catalyses the reaction an epoxide + H2O = an ethanediol. Its function is as follows. Aminopeptidase that preferentially cleaves di- and tripeptides. Also has low epoxide hydrolase activity (in vitro). Can hydrolyze the epoxide leukotriene LTA(4) but it forms preferentially 5,6-dihydroxy-7,9,11,14-eicosatetraenoic acid rather than the cytokine leukotriene B(4) as the product compared to the homologous mammalian enzyme (in vitro). The chain is Leucine aminopeptidase 2 from Pyricularia oryzae (strain 70-15 / ATCC MYA-4617 / FGSC 8958) (Rice blast fungus).